The following is a 245-amino-acid chain: Thiopurine S-methyltransferase (245 aa).

Phosphoserine is present on S14. An S-adenosyl-L-methionine-binding site is contributed by 29–40 (WQDKWVNGKTAF). Residue F40 participates in substrate binding. Residue K58 is modified to N6-acetyllysine. Residues L69, E90, 134–135 (SI), and R152 each bind S-adenosyl-L-methionine.

Belongs to the class I-like SAM-binding methyltransferase superfamily. TPMT family. In terms of assembly, monomer.

It is found in the cytoplasm. It carries out the reaction S-adenosyl-L-methionine + a thiopurine = S-adenosyl-L-homocysteine + a thiopurine S-methylether.. This chain is Thiopurine S-methyltransferase (TPMT), found in Gorilla gorilla gorilla (Western lowland gorilla).